Reading from the N-terminus, the 392-residue chain is Zinc transporter zipt-7.1 (392 aa).

N-linked (GlcNAc...) asparagine glycosylation is present at asparagine 63. A run of 2 helical transmembrane segments spans residues 82 to 102 and 114 to 134; these read VFSLSAVIGISLAPCTLLFFI and ILLAFGAGGLLGDALLHIIPH. Positions 139-162 are disordered; the sequence is HSHGAHDHDHAHSHDHAHNDHSHD. Over residues 142–162 the composition is skewed to basic and acidic residues; that stretch reads GAHDHDHAHSHDHAHNDHSHD. Residues 170–190 traverse the membrane as a helical segment; sequence GIYVIAGILVFMMVEQLVRII. An N-linked (GlcNAc...) asparagine glycan is attached at asparagine 248. 3 helical membrane passes run 255–275, 304–324, and 331–351; these read IGASFSAGSTLGWVTTLTVLL, VTALGAITGCIFSLLISNPVL, and GAIMPFTAGGFIYIATVSVIP. N-linked (GlcNAc...) asparagine glycosylation occurs at asparagine 361. The helical transmembrane segment at 371-391 threads the bilayer; that stretch reads SLVHLIAICMGVGMMYIVSLV.

This sequence belongs to the ZIP transporter (TC 2.A.5) family. KE4/Catsup subfamily.

The protein resides in the membrane. Its function is as follows. Zinc transporter which regulates intracellular zinc levels. Required for spermatogenesis in both hermaphrodites and males where it resides in an inactive form in immature sperm, spermatids, but is likely activated in response to reduced spe-4 and spe-6 function. Upon activation, mediates the release of zinc from internal stores in spermatids into the cytoplasm. The resulting increase in cytoplasmic zinc levels promotes spermatid activation and subsequent differentiation into mature motile sperm that are capable of fertilization. The chain is Zinc transporter zipt-7.1 from Caenorhabditis briggsae.